A 221-amino-acid chain; its full sequence is Transmembrane protein 225B (221 aa).

The next 4 membrane-spanning stretches occupy residues 14–34 (WAIV…VSIF), 77–97 (VFLL…MPFA), 109–129 (FVLA…LVLH), and 147–167 (VLWP…AGTI).

The protein localises to the membrane. In Homo sapiens (Human), this protein is Transmembrane protein 225B.